Consider the following 298-residue polypeptide: Oxygen-dependent coproporphyrinogen-III oxidase (298 aa).

Serine 90 contributes to the substrate binding site. Positions 94 and 104 each coordinate a divalent metal cation. Catalysis depends on histidine 104, which acts as the Proton donor. 106–108 (NVR) lines the substrate pocket. The a divalent metal cation site is built by histidine 143 and histidine 173. An important for dimerization region spans residues 238 to 273 (YVEFNLVWDRGTLFGLQSGGRTESILMSLPPIVKWR). 256-258 (GGR) provides a ligand contact to substrate.

This sequence belongs to the aerobic coproporphyrinogen-III oxidase family. In terms of assembly, homodimer. It depends on a divalent metal cation as a cofactor.

Its subcellular location is the cytoplasm. It carries out the reaction coproporphyrinogen III + O2 + 2 H(+) = protoporphyrinogen IX + 2 CO2 + 2 H2O. Its pathway is porphyrin-containing compound metabolism; protoporphyrin-IX biosynthesis; protoporphyrinogen-IX from coproporphyrinogen-III (O2 route): step 1/1. Involved in the heme biosynthesis. Catalyzes the aerobic oxidative decarboxylation of propionate groups of rings A and B of coproporphyrinogen-III to yield the vinyl groups in protoporphyrinogen-IX. The protein is Oxygen-dependent coproporphyrinogen-III oxidase of Dechloromonas aromatica (strain RCB).